The chain runs to 870 residues: Dynamin-2 (870 aa).

Residues 28–294 (HLDLPQIAVV…LTNHIRESLP (267 aa)) enclose the Dynamin-type G domain. The interval 38 to 45 (GGQSAGKS) is G1 motif. GDP contacts are provided by S41, G43, K44, S45, S46, R59, and G60. The tract at residues 64–66 (VTR) is G2 motif. The segment at 136 to 139 (DLPG) is G3 motif. The interval 205-208 (TKLD) is G4 motif. K206, D208, and D211 together coordinate GDP. Y231 is subject to Phosphotyrosine; by SRC. The segment at 235 to 238 (VNRS) is G5 motif. 3 residues coordinate GDP: N236, R237, and Q239. The residue at position 299 (K299) is an N6-acetyllysine. The PH domain occupies 519–625 (LVIRRGWLTI…WKASFLRAGV (107 aa)). Phosphotyrosine; by SRC is present on Y597. K598 is subject to N6-acetyllysine. Residues 653 to 744 (VETIRNLVDS…IIGDISTSTV (92 aa)) form the GED domain. The disordered stretch occupies residues 741–870 (TSTVSTPVPP…IRPAEPSLLD (130 aa)). A Phosphothreonine modification is found at T755. Positions 756–767 (WLQSASSHSPTP) are enriched in polar residues. The residue at position 764 (S764) is a Phosphoserine; by CDK1. Low complexity predominate over residues 796-806 (VPVGAAASFSA). Residues 826 to 855 (PAPPQIPSRPVRIPPGIPPGVPSRRPPAAP) show a composition bias toward pro residues. S848 carries the post-translational modification Phosphoserine; by GSK3-alpha.

It belongs to the TRAFAC class dynamin-like GTPase superfamily. Dynamin/Fzo/YdjA family. Oligomerizes into a helical polymer that self-assembles around the vesicle membrane, when associated to the menbrane through lipid binding. Interacts with SHANK1 and SHANK2. Interacts with SNX9. Interacts (via C-terminal proline-rich domain (PRD)) with SNX18 (via SH3 domain); this interaction regulates ATG9A and ATG16L1 trafficking from recycling endosomes to sites of autophagosome formation. Interacts with SNX33 (via SH3 domain). Interacts with MYO1E (via SH3 domain). Interacts with PSTPIP1 (via SH3 domain). Interacts with CTNND2. Interacts (via C-terminal proline-rich domain (PRD)) with BIN1 (via SH3 domain); this interaction allows the recruitment of DNM2 to the membrane tubules and inhibits self-assembly-stimulated GTPase activity on the membrane. Interacts with GABARAP, GABARAPL1 and GABARAPL2. Interacts with MAP1LC3B (the lipidate and non-lipidated LC3 form); this interaction mediates recycling endosome scission leading to autophagosome release. Interacts with ITSN1. Interacts (via C-terminal proline-rich domain (PRD)) with SH3BP4 (via SH3 domain); this interaction controls the GTPase activity and is prevented by EGFR-induced tyrosine phosphorylation of either DNM2 or SH3BP4. May interact with PIK3C3. May be a component of a complex composed of RAB5A (in GDP-bound form), DYN2 and PIK3C3. Interacts with SDC4; this interaction is markedly enhanced at focal ahesion site upon induction of focal adhesions and stress-fiber formation. Interacts with ACTN1. Interacts with CTTN; this interaction stimulates the intrinsic GTPase activity of DNM2 and stabilizes the association of DNM2 and actin filaments; in addition this interaction is stimulated by ligand binding to the receptor, leading to the recruitment of the DNM2-CTTN complex to the sequestered receptor-ligand complex to its internalization. Interacts with NOSTRIN (via SH3 domain); this interaction allows the recruitment of NOS3 to dynamin-positive structures. Interacts with TUBG1; this interaction may participate in centrosome cohesion. In terms of processing, phosphorylation at Ser-848 by GSK3-alpha relieves the inhibition of BIN1 and promotes endocytosis. Phosphorylation at Ser-764 by CDK1 is greatly increased upon mitotic entry. It regulates cytokinesis downstream of calcineurin, and does not affect clathrin-mediated endocytosis. Dephosphorylated by calcineurin/PP2 during cytokinesis in a Ca(2+)- and calmodulin-dependent manner. Phosphorylated on tyrosine residues by EGFR and after activation of SRC. Widely expressed. Expressed in skeletal muscle and the peripheral nerve.

The protein resides in the cytoplasm. Its subcellular location is the cytoskeleton. The protein localises to the cytoplasmic vesicle. It is found in the clathrin-coated vesicle. It localises to the cell projection. The protein resides in the uropodium. Its subcellular location is the endosome. The protein localises to the microtubule organizing center. It is found in the centrosome. It localises to the centriole. The protein resides in the recycling endosome. Its subcellular location is the phagocytic cup. The protein localises to the phagosome membrane. It is found in the podosome. It localises to the cell junction. The protein resides in the postsynaptic density. Its subcellular location is the synapse. The protein localises to the synaptosome. It is found in the midbody. It localises to the membrane. The protein resides in the clathrin-coated pit. The catalysed reaction is GTP + H2O = GDP + phosphate + H(+). Functionally, catalyzes the hydrolysis of GTP and utilizes this energy to mediate vesicle scission at plasma membrane during endocytosis and filament remodeling at many actin structures during organization of the actin cytoskeleton. Plays an important role in vesicular trafficking processes, namely clathrin-mediated endocytosis (CME), exocytic and clathrin-coated vesicle from the trans-Golgi network, and PDGF stimulated macropinocytosis. During vesicular trafficking process, associates to the membrane, through lipid binding, and self-assembles into ring-like structure through oligomerization to form a helical polymer around the vesicle membrane and leading to vesicle scission. Plays a role in organization of the actin cytoskeleton by mediating arrangement of stress fibers and actin bundles in podocytes. During organization of the actin cytoskeleton, self-assembles into ring-like structure that directly bundles actin filaments to form typical membrane tubules decorated with dynamin spiral polymers. Self-assembly increases GTPase activity and the GTP hydrolysis causes the rapid depolymerization of dynamin spiral polymers, and results in dispersion of actin bundles. Remodels, through its interaction with CTTN, bundled actin filaments in a GTPase-dependent manner and plays a role in orchestrating the global actomyosin cytoskeleton. The interaction with CTTN stabilizes the interaction of DNM2 and actin filaments and stimulates the intrinsic GTPase activity that results in actin filament-barbed ends and increases the sensitivity of filaments in bundles to the actin depolymerizing factor, CFL1. Plays a role in the autophagy process, by participating in the formation of ATG9A vesicles destined for the autophagosomes through its interaction with SNX18, by mediating recycling endosome scission leading to autophagosome release through MAP1LC3B interaction. Also regulates maturation of apoptotic cell corpse-containing phagosomes by recruiting PIK3C3 to the phagosome membrane. Also plays a role in cytokinesis. May participate in centrosome cohesion through its interaction with TUBG1. Plays a role in the regulation of neuron morphology, axon growth and formation of neuronal growth cones. Involved in membrane tubulation. The polypeptide is Dynamin-2 (Homo sapiens (Human)).